Consider the following 596-residue polypeptide: Ferredoxin--nitrite reductase, chloroplastic (596 aa).

The N-terminal 28 residues, 1 to 28 (MASSASLQRFLPPYPHAAASRCRPPGVR), are a transit peptide targeting the chloroplast. The segment at 1–56 (MASSASLQRFLPPYPHAAASRCRPPGVRARPVQSSTVSAPSSSTPAADEAVSAERL) is disordered. Residues 31 to 47 (PVQSSTVSAPSSSTPAA) show a composition bias toward low complexity. The [4Fe-4S] cluster site is built by Cys-474, Cys-480, Cys-515, and Cys-519. Cys-519 is a siroheme binding site.

Belongs to the nitrite and sulfite reductase 4Fe-4S domain family. Monomer. The cofactor is siroheme. It depends on [4Fe-4S] cluster as a cofactor.

It localises to the plastid. Its subcellular location is the chloroplast. It carries out the reaction 6 oxidized [2Fe-2S]-[ferredoxin] + NH4(+) + 2 H2O = nitrite + 6 reduced [2Fe-2S]-[ferredoxin] + 8 H(+). The protein operates within nitrogen metabolism; nitrate reduction (assimilation). Catalyzes the six-electron reduction of nitrite to ammonium. The polypeptide is Ferredoxin--nitrite reductase, chloroplastic (Oryza sativa subsp. japonica (Rice)).